We begin with the raw amino-acid sequence, 137 residues long: Gonadotropin subunit beta-1 (137 aa).

The signal sequence occupies residues 1–24 (MYCTHLMTLQLVVMAMLWVTPVRA). Intrachain disulfides connect Cys-32-Cys-78, Cys-46-Cys-93, Cys-55-Cys-108, Cys-59-Cys-110, and Cys-113-Cys-120. N-linked (GlcNAc...) asparagine glycosylation occurs at Asn-36.

Belongs to the glycoprotein hormones subunit beta family. As to quaternary structure, heterodimer of an alpha and a beta chain.

Its subcellular location is the secreted. Involved in gametogenesis and steroidogenesis. This Oncorhynchus keta (Chum salmon) protein is Gonadotropin subunit beta-1 (cgba).